Consider the following 266-residue polypeptide: DLA class II histocompatibility antigen, DR-1 beta chain (266 aa).

Positions 1 to 29 (MVCLCFLGGSWMTALMLILMVLNPPFAWA) are cleaved as a signal peptide. The tract at residues 30 to 124 (RDTPPHFLEV…IESFTVQRRV (95 aa)) is beta-1. The Extracellular segment spans residues 30-227 (RDTPPHFLEV…RAQSDSAQSK (198 aa)). 2 cysteine pairs are disulfide-bonded: Cys-44-Cys-108 and Cys-146-Cys-202. Residue Asn-48 is glycosylated (N-linked (GlcNAc...) asparagine). The beta-2 stretch occupies residues 125–227 (EPTVTVYPTK…RAQSDSAQSK (103 aa)). In terms of domain architecture, Ig-like C1-type spans 126 to 214 (PTVTVYPTKT…EHPSLTSPVT (89 aa)). Residues 228 to 250 (MLSGIGGFVLGLLFLAVGLFIYF) form a helical membrane-spanning segment. Over 251 to 266 (RNQKGHSGLQPTGLLS) the chain is Cytoplasmic.

The protein belongs to the MHC class II family.

It localises to the membrane. The chain is DLA class II histocompatibility antigen, DR-1 beta chain from Canis lupus familiaris (Dog).